A 429-amino-acid polypeptide reads, in one-letter code: Glucose-1-phosphate adenylyltransferase (429 aa).

Alpha-D-glucose 1-phosphate contacts are provided by residues Gly-162, 177-178 (EK), and Ser-209.

Belongs to the bacterial/plant glucose-1-phosphate adenylyltransferase family. As to quaternary structure, homotetramer.

The catalysed reaction is alpha-D-glucose 1-phosphate + ATP + H(+) = ADP-alpha-D-glucose + diphosphate. Its pathway is glycan biosynthesis; glycogen biosynthesis. Functionally, involved in the biosynthesis of ADP-glucose, a building block required for the elongation reactions to produce glycogen. Catalyzes the reaction between ATP and alpha-D-glucose 1-phosphate (G1P) to produce pyrophosphate and ADP-Glc. In Rippkaea orientalis (strain PCC 8801 / RF-1) (Cyanothece sp. (strain PCC 8801)), this protein is Glucose-1-phosphate adenylyltransferase.